A 227-amino-acid polypeptide reads, in one-letter code: Thiamine-phosphate synthase (227 aa).

4-amino-2-methyl-5-(diphosphooxymethyl)pyrimidine is bound by residues 50 to 54 and aspartate 82; that span reads QFRQK. Residues aspartate 83 and aspartate 102 each coordinate Mg(2+). Threonine 121 provides a ligand contact to 4-amino-2-methyl-5-(diphosphooxymethyl)pyrimidine. Residue 147 to 149 coordinates 2-[(2R,5Z)-2-carboxy-4-methylthiazol-5(2H)-ylidene]ethyl phosphate; sequence TTS. A 4-amino-2-methyl-5-(diphosphooxymethyl)pyrimidine-binding site is contributed by lysine 150. 2-[(2R,5Z)-2-carboxy-4-methylthiazol-5(2H)-ylidene]ethyl phosphate-binding positions include glycine 178 and 198–199; that span reads LS.

It belongs to the thiamine-phosphate synthase family. Requires Mg(2+) as cofactor.

The enzyme catalyses 2-[(2R,5Z)-2-carboxy-4-methylthiazol-5(2H)-ylidene]ethyl phosphate + 4-amino-2-methyl-5-(diphosphooxymethyl)pyrimidine + 2 H(+) = thiamine phosphate + CO2 + diphosphate. It carries out the reaction 2-(2-carboxy-4-methylthiazol-5-yl)ethyl phosphate + 4-amino-2-methyl-5-(diphosphooxymethyl)pyrimidine + 2 H(+) = thiamine phosphate + CO2 + diphosphate. It catalyses the reaction 4-methyl-5-(2-phosphooxyethyl)-thiazole + 4-amino-2-methyl-5-(diphosphooxymethyl)pyrimidine + H(+) = thiamine phosphate + diphosphate. The protein operates within cofactor biosynthesis; thiamine diphosphate biosynthesis; thiamine phosphate from 4-amino-2-methyl-5-diphosphomethylpyrimidine and 4-methyl-5-(2-phosphoethyl)-thiazole: step 1/1. Its function is as follows. Condenses 4-methyl-5-(beta-hydroxyethyl)thiazole monophosphate (THZ-P) and 2-methyl-4-amino-5-hydroxymethyl pyrimidine pyrophosphate (HMP-PP) to form thiamine monophosphate (TMP). In Salinibacter ruber (strain DSM 13855 / M31), this protein is Thiamine-phosphate synthase.